Consider the following 68-residue polypeptide: Large ribosomal subunit protein bL32 (68 aa).

Residues 1–25 form a disordered region; it reads MAVPQNKITKSRRGQRRSHDALVAG.

Belongs to the bacterial ribosomal protein bL32 family.

The polypeptide is Large ribosomal subunit protein bL32 (Dinoroseobacter shibae (strain DSM 16493 / NCIMB 14021 / DFL 12)).